Consider the following 426-residue polypeptide: Glucan endo-1,3-beta-glucosidase 11 (426 aa).

The N-terminal stretch at 1-30 is a signal peptide; it reads MELTSFHRSSLLFLISLTLIILPTTTTSIG. Asn112 carries N-linked (GlcNAc...) asparagine glycosylation. Glu121 functions as the Proton donor in the catalytic mechanism. Asn126 is a glycosylation site (N-linked (GlcNAc...) asparagine). Glu266 functions as the Nucleophile in the catalytic mechanism. A compositionally biased stretch (gly residues) spans 360 to 372; the sequence is GGGTGGGNSSSGG. Residues 360 to 389 are disordered; the sequence is GGGTGGGNSSSGGGRDKSPVFPVSPVAPDS. A glycan (N-linked (GlcNAc...) asparagine) is linked at Asn367. The GPI-anchor amidated serine moiety is linked to residue Ser398. A propeptide spans 399-426 (removed in mature form); it reads ASPVTGKRKGKGAILSLVVSMLLARHLL.

It belongs to the glycosyl hydrolase 17 family.

The protein localises to the secreted. The protein resides in the cell wall. It localises to the cell membrane. It catalyses the reaction Hydrolysis of (1-&gt;3)-beta-D-glucosidic linkages in (1-&gt;3)-beta-D-glucans.. The protein is Glucan endo-1,3-beta-glucosidase 11 of Arabidopsis thaliana (Mouse-ear cress).